We begin with the raw amino-acid sequence, 858 residues long: Neural cell adhesion molecule 1 (858 aa).

Residues 1 to 19 form the signal peptide; sequence MLQTKDLIWTLFFLGTAVS. Ig-like C2-type domains follow at residues 20-111, 116-205, 212-301, 308-413, and 416-501; these read LQVD…ATVN, QKLM…KDIQ, PTIQ…ATIH, PKIT…LEVQ, and PKLQ…ESLE. Over 20 to 718 the chain is Extracellular; it reads LQVDIVPSQG…IPANGSPTSG (699 aa). Disulfide bonds link C41–C96 and C139–C189. N222 carries an N-linked (GlcNAc...) asparagine glycan. C235 and C287 are disulfide-bonded. Residues N315, N347, N433, N459, and N488 are each glycosylated (N-linked (GlcNAc...) asparagine). The cysteines at positions 329 and 395 are disulfide-linked. The cysteines at positions 436 and 489 are disulfide-linked. 2 Fibronectin type-III domains span residues 509–608 and 611–706; these read TPSS…TQPV and EPSA…SAQP. The GPI-anchor amidated asparagine moiety is linked to residue P706. Residues 719–739 traverse the membrane as a helical segment; the sequence is LSTGAIVGILIVIFVLLLVVV. The Cytoplasmic portion of the chain corresponds to 740–858; it reads DITCYFLNKC…TQTKENESKA (119 aa). I741 is lipidated: GPI-anchor amidated asparagine. The segment at 766–858 is disordered; it reads GAKGKDMEEG…TQTKENESKA (93 aa). Composition is skewed to basic and acidic residues over residues 768 to 809 and 817 to 834; these read KGKD…HTEP and EPEK…ETET. S780 and S784 each carry phosphoserine.

(Microbial infection) Interacts with rabies virus glycoprotein. As to quaternary structure, (Microbial infection) Interacts with Zika virus envelope protein E. In terms of assembly, interacts with MDK. Found in a complex with SLC39A6, SLC39A10 and with NCAM1; this complex controls NCAM1 phosphorylation and integration into focal adhesion complexes during epithelial-tomesenchymal transition. Interacts with synaptic plasticity regulator PANTS. Polysialylated at Asn-459 and Asn-488 by ST8SIA2 and ST8SIA4. Polysialylation modulates cell interactions by confering both attractive and repulsive properties that are highly regulated by ST8SIA2 and ST8SIA4. Polysialylation is formed on a-2,3-linked sialic acid of core glycans.

The protein localises to the cell membrane. The protein resides in the secreted. Functionally, this protein is a cell adhesion molecule involved in neuron-neuron adhesion, neurite fasciculation, outgrowth of neurites, etc. Its function is as follows. (Microbial infection) Acts as a receptor for rabies virus. (Microbial infection) Acts as a receptor for Zika virus. This chain is Neural cell adhesion molecule 1, found in Homo sapiens (Human).